Here is a 256-residue protein sequence, read N- to C-terminus: MESWLTSFITQSLVYSLLVVGIVSFLESLALVGLLLPGIILMTTLGTFIGDGKLSFYPAWISGTTGCLLGDWISYYIGLYFKNWLYNFNFLKKNQKLLDKTKSFLDKHSMLTIILGRFIGPTRPLIPMVSGMLKLPLKKFVFPSIIGCILWPPVYFFPGIVTGIAIKIPESSQSYYFKWLLLLISILIWLGIWLISKWWKMRKNHIDNRTSFFTKKKIGWLAILTMSSGILSLIAIQFHPTMLIFREIFSTILLGT.

Helical transmembrane passes span 6–26 (TSFI…VSFL), 29–49 (LALV…GTFI), 61–81 (ISGT…GLYF), 145–165 (IIGC…TGIA), 175–195 (YYFK…IWLI), and 218–238 (IGWL…AIQF).

This sequence belongs to the DedA family.

The protein localises to the cell membrane. This is an uncharacterized protein from Buchnera aphidicola subsp. Acyrthosiphon pisum (strain APS) (Acyrthosiphon pisum symbiotic bacterium).